The chain runs to 112 residues: Small ribosomal subunit protein eS24 (112 aa).

The disordered stretch occupies residues 88-112 (RGMAGEEEGNADAQDAPSGDAAEAS).

This sequence belongs to the eukaryotic ribosomal protein eS24 family.

The sequence is that of Small ribosomal subunit protein eS24 from Methanospirillum hungatei JF-1 (strain ATCC 27890 / DSM 864 / NBRC 100397 / JF-1).